The chain runs to 419 residues: 3-isopropylmalate dehydratase large subunit (419 aa).

Cysteine 300, cysteine 360, and cysteine 363 together coordinate [4Fe-4S] cluster.

This sequence belongs to the aconitase/IPM isomerase family. LeuC type 2 subfamily. In terms of assembly, heterodimer of LeuC and LeuD. It depends on [4Fe-4S] cluster as a cofactor.

The enzyme catalyses (2R,3S)-3-isopropylmalate = (2S)-2-isopropylmalate. Its pathway is amino-acid biosynthesis; L-leucine biosynthesis; L-leucine from 3-methyl-2-oxobutanoate: step 2/4. Catalyzes the isomerization between 2-isopropylmalate and 3-isopropylmalate, via the formation of 2-isopropylmaleate. This is 3-isopropylmalate dehydratase large subunit from Clostridium beijerinckii (strain ATCC 51743 / NCIMB 8052) (Clostridium acetobutylicum).